We begin with the raw amino-acid sequence, 225 residues long: Small ribosomal subunit protein uS3 (225 aa).

Residues 16–85 enclose the KH type-2 domain; sequence VYEYLVKETE…TPQIEVKDVK (70 aa). A disordered region spans residues 200–225; sequence GENVGTESETDKADEQGREAANTEES. The span at 208–217 shows a compositional bias: basic and acidic residues; sequence ETDKADEQGR.

The protein belongs to the universal ribosomal protein uS3 family. Part of the 30S ribosomal subunit.

Binds the lower part of the 30S subunit head. This is Small ribosomal subunit protein uS3 from Thermoplasma volcanium (strain ATCC 51530 / DSM 4299 / JCM 9571 / NBRC 15438 / GSS1).